Here is a 514-residue protein sequence, read N- to C-terminus: G-protein coupled receptor Mth (514 aa).

Positions 1–24 (MKTLLVLRISTVILVVLVIQKSYA) are cleaved as a signal peptide. Topologically, residues 25–218 (DILECDYFDT…CLIVPSITGQ (194 aa)) are extracellular. 5 disulfide bridges follow: Cys29–Cys83, Cys85–Cys90, Cys94–Cys188, Cys95–Cys106, and Cys150–Cys209. Asn45 carries an N-linked (GlcNAc...) asparagine glycan. Residues Asn109, Asn123, Asn170, and Asn198 are each glycosylated (N-linked (GlcNAc...) asparagine). A helical membrane pass occupies residues 219 to 239 (TVVMISSLICMVLTIAVYLFV). Topologically, residues 240 to 248 (KKLQNLHGK) are cytoplasmic. A helical membrane pass occupies residues 249–269 (CFICYMVCLFMGYLFLLLDLW). Topologically, residues 270–278 (QISISFCKP) are extracellular. Residues 279 to 299 (AGFLGYFFVMAAFFWLSVISL) traverse the membrane as a helical segment. Over 300 to 320 (HLWNTFRGSSHKANRFLFEHR) the chain is Cytoplasmic. Residues 321–341 (FLAYNTYAWGMAVVLTGITVL) traverse the membrane as a helical segment. Residues 342–370 (ADNIVENQDWNPRVGHEGHCWIYTQAWSA) are Extracellular-facing. Residues 371-391 (MLYFYGPMVFLIAFNITMFIL) traverse the membrane as a helical segment. The Cytoplasmic segment spans residues 392–424 (TAKRILGVKKDIQNFAHRQERKQKLNSDKQTYT). A helical membrane pass occupies residues 425-445 (FFLRLFIIMGLSWSLEIGSYF). The Extracellular segment spans residues 446–454 (SQSNQTWAN). N-linked (GlcNAc...) asparagine glycosylation is present at Asn449. Residues 455 to 475 (VFLVADYLNWSQGIIIFILFV) form a helical membrane-spanning segment. The Cytoplasmic portion of the chain corresponds to 476 to 514 (LKRSTWRLLQESIRGEGEEVNNSEEEISLENTTTRNVLL).

This sequence belongs to the G-protein coupled receptor 2 family. Mth subfamily. As to quaternary structure, homodimer.

Its subcellular location is the cell membrane. In terms of biological role, involved in biological aging and stress response. Essential for adult survival. Required in the presynaptic motor neuron to up-regulate neurotransmitter exocytosis at larval glutamatergic neuromuscular junctions (NMJs). Regulates a step associated with docking and clustering of vesicles at release sites. SP/Acp70A and sun are agonists that activate mth in vitro. In Drosophila melanogaster (Fruit fly), this protein is G-protein coupled receptor Mth (mth).